The chain runs to 163 residues: COP9 signalosome complex subunit 9 (163 aa).

In terms of domain architecture, PCI spans 5-120; that stretch reads EVLHAVLDPK…SVGRRIKVLR (116 aa).

Component of a COP9 signalosome-like (CSN) complex.

The protein localises to the cytoplasm. The protein resides in the nucleus. Component of the COP9 signalosome (CSN) complex that acts as a regulator of the ubiquitin (Ubl) conjugation pathway by mediating the deneddylation of the cullin subunit of SCF-type E3 ubiquitin-protein ligase complexes. The complex is involved in the regulation of the mating pheromone response. This chain is COP9 signalosome complex subunit 9 (CSN9), found in Eremothecium gossypii (strain ATCC 10895 / CBS 109.51 / FGSC 9923 / NRRL Y-1056) (Yeast).